The chain runs to 308 residues: Acetyl-coenzyme A carboxylase carboxyl transferase subunit beta 1 (308 aa).

A CoA carboxyltransferase N-terminal domain is found at 25-294; sequence VWTKCTSCEQ…PMVVSVNESP (270 aa). Cys-29, Cys-32, Cys-48, and Cys-51 together coordinate Zn(2+). The segment at 29 to 51 adopts a C4-type zinc-finger fold; that stretch reads CTSCEQVLYHAELERNLEVCPKC. The tract at residues 289 to 308 is disordered; sequence SVNESPNEEPYSVPEADEKG.

Belongs to the AccD/PCCB family. In terms of assembly, acetyl-CoA carboxylase is a heterohexamer composed of biotin carboxyl carrier protein (AccB), biotin carboxylase (AccC) and two subunits each of ACCase subunit alpha (AccA) and ACCase subunit beta (AccD). Zn(2+) serves as cofactor.

It is found in the cytoplasm. It catalyses the reaction N(6)-carboxybiotinyl-L-lysyl-[protein] + acetyl-CoA = N(6)-biotinyl-L-lysyl-[protein] + malonyl-CoA. It functions in the pathway lipid metabolism; malonyl-CoA biosynthesis; malonyl-CoA from acetyl-CoA: step 1/1. Its function is as follows. Component of the acetyl coenzyme A carboxylase (ACC) complex. Biotin carboxylase (BC) catalyzes the carboxylation of biotin on its carrier protein (BCCP) and then the CO(2) group is transferred by the transcarboxylase to acetyl-CoA to form malonyl-CoA. The polypeptide is Acetyl-coenzyme A carboxylase carboxyl transferase subunit beta 1 (Vibrio campbellii (strain ATCC BAA-1116)).